Here is a 543-residue protein sequence, read N- to C-terminus: MNTIIMIPVATAIVSLLVGTVTGYAIRKHSWEQKAQNAQNDADHILADAKAQVAAAEAEVNAQKQAAIAVKQSAENTKKEKILEAQEQIRDYRQKTEDELNSKKDNLARQENRLQQREDTLDHKNSLLDEREAGLTEKEDQLKQQNASLKAKLDEADELVGIRRQKLYDVAKLDKDQAKKIVLDQLSDELVKERAEMIRNSNEEVMAKADRYANQVIIDAIQSSAADTVAETTVSVVDLPNEEMKGRIIGREGRNIRSFEALTGIDLIIDDTPKVVTLSGFDPIRREIAKRAMERLIKDGRIHPARIEEMVDKARKEVNDDIYEAGESALMELGIHRMNPELVKTLGRLKYHTSYGQNVLSHSIEVGKLAGTMAAELGLDEKLAVRAGLLHDIGKAIDHDIEGSHVEIGVELTRKYHEPDVVVNAIAAHHGDVPKLSFIAELVVAADTISSARPGARSESLENYIRRLTDLEKIAKSYQGVKQAYAIQAGREVRVMVEPDEISDDRTVILARDIRNQVEKELDYPGNIKITVIREKRVVAIAK.

Residues 4-24 (IIMIPVATAIVSLLVGTVTGY) traverse the membrane as a helical segment. In terms of domain architecture, KH spans 233-296 (TVSVVDLPNE…EIAKRAMERL (64 aa)). The 94-residue stretch at 359–452 (VLSHSIEVGK…VVAADTISSA (94 aa)) folds into the HD domain.

Belongs to the RNase Y family.

The protein localises to the cell membrane. Functionally, endoribonuclease that initiates mRNA decay. The polypeptide is Ribonuclease Y (Lactobacillus acidophilus (strain ATCC 700396 / NCK56 / N2 / NCFM)).